The primary structure comprises 452 residues: Coproporphyrinogen III oxidase, anaerobic 1 (452 aa).

One can recognise a Radical SAM core domain in the interval 45–278 (LDPAVPISVY…ANLAARLFTE (234 aa)). S-adenosyl-L-methionine is bound at residue Tyr-54. Residues Cys-60 and Cys-64 each contribute to the [4Fe-4S] cluster site. Phe-66 is a binding site for S-adenosyl-L-methionine. A [4Fe-4S] cluster-binding site is contributed by Cys-67. Residues Gly-111, 112–113 (GT), Glu-144, Gln-171, Arg-183, and Asp-208 contribute to the S-adenosyl-L-methionine site.

This sequence belongs to the anaerobic coproporphyrinogen-III oxidase family. Monomer. Requires [4Fe-4S] cluster as cofactor.

It localises to the cytoplasm. The catalysed reaction is coproporphyrinogen III + 2 S-adenosyl-L-methionine = protoporphyrinogen IX + 2 5'-deoxyadenosine + 2 L-methionine + 2 CO2. It participates in porphyrin-containing compound metabolism; protoporphyrin-IX biosynthesis; protoporphyrinogen-IX from coproporphyrinogen-III (AdoMet route): step 1/1. Functionally, anaerobic transformation of coproporphyrinogen III into protoporphyrinogen IX. Dedicated to bacteriochlorophyll biosynthesis. In Cereibacter sphaeroides (strain ATCC 17023 / DSM 158 / JCM 6121 / CCUG 31486 / LMG 2827 / NBRC 12203 / NCIMB 8253 / ATH 2.4.1.) (Rhodobacter sphaeroides), this protein is Coproporphyrinogen III oxidase, anaerobic 1 (hemN).